Here is a 130-residue protein sequence, read N- to C-terminus: MAKRVKRAGRKREKKHVERGIAHIHSTFNNTIVTITDPAGNTIAWASAGTVGFKGSRKSTPFAAQMAAESAAKAAMDHGMRTVDVYVKGPGAGREAAIRALQAAGLEVSLIKDVTPIPHNGCRPPKRRRV.

The protein belongs to the universal ribosomal protein uS11 family. Part of the 30S ribosomal subunit. Interacts with proteins S7 and S18. Binds to IF-3.

Located on the platform of the 30S subunit, it bridges several disparate RNA helices of the 16S rRNA. Forms part of the Shine-Dalgarno cleft in the 70S ribosome. This is Small ribosomal subunit protein uS11 from Caldanaerobacter subterraneus subsp. tengcongensis (strain DSM 15242 / JCM 11007 / NBRC 100824 / MB4) (Thermoanaerobacter tengcongensis).